The chain runs to 386 residues: Formate-dependent phosphoribosylglycinamide formyltransferase (386 aa).

Residues 15–16 (EL) and glutamate 75 contribute to the N(1)-(5-phospho-beta-D-ribosyl)glycinamide site. ATP is bound by residues arginine 107, lysine 148, 153–158 (SSGKGQ), 188–191 (EQFI), and glutamate 196. Positions 112-301 (ALAAQQLNLQ…EFELHLRAIV (190 aa)) constitute an ATP-grasp domain. The Mg(2+) site is built by glutamate 260 and glutamate 272. Residues aspartate 279, lysine 349, and 356–357 (RR) each bind N(1)-(5-phospho-beta-D-ribosyl)glycinamide.

The protein belongs to the PurK/PurT family. Homodimer.

The catalysed reaction is N(1)-(5-phospho-beta-D-ribosyl)glycinamide + formate + ATP = N(2)-formyl-N(1)-(5-phospho-beta-D-ribosyl)glycinamide + ADP + phosphate + H(+). The protein operates within purine metabolism; IMP biosynthesis via de novo pathway; N(2)-formyl-N(1)-(5-phospho-D-ribosyl)glycinamide from N(1)-(5-phospho-D-ribosyl)glycinamide (formate route): step 1/1. Functionally, involved in the de novo purine biosynthesis. Catalyzes the transfer of formate to 5-phospho-ribosyl-glycinamide (GAR), producing 5-phospho-ribosyl-N-formylglycinamide (FGAR). Formate is provided by PurU via hydrolysis of 10-formyl-tetrahydrofolate. The sequence is that of Formate-dependent phosphoribosylglycinamide formyltransferase from Francisella tularensis subsp. novicida (strain U112).